The sequence spans 324 residues: NADH-ubiquinone oxidoreductase chain 1 (324 aa).

Helical transmembrane passes span 9–29 (LINP…LTLL), 76–96 (LFLV…APMP), 106–126 (LGVL…LGSG), 146–166 (ISYE…WGGY), 177–197 (ALWL…STLA), 228–248 (LLFL…AILF), 259–279 (ELTT…FLWV), and 299–319 (FLPL…AFAG).

This sequence belongs to the complex I subunit 1 family.

It is found in the mitochondrion inner membrane. The catalysed reaction is a ubiquinone + NADH + 5 H(+)(in) = a ubiquinol + NAD(+) + 4 H(+)(out). Its function is as follows. Core subunit of the mitochondrial membrane respiratory chain NADH dehydrogenase (Complex I) that is believed to belong to the minimal assembly required for catalysis. Complex I functions in the transfer of electrons from NADH to the respiratory chain. The immediate electron acceptor for the enzyme is believed to be ubiquinone. This is NADH-ubiquinone oxidoreductase chain 1 (MT-ND1) from Formosania lacustris (Oriental stream loach).